A 98-amino-acid chain; its full sequence is Small ribosomal subunit protein bS6c (98 aa).

The protein belongs to the bacterial ribosomal protein bS6 family.

It localises to the plastid. The protein localises to the chloroplast. Functionally, binds together with bS18 to 16S ribosomal RNA. The protein is Small ribosomal subunit protein bS6c of Phaeodactylum tricornutum (strain CCAP 1055/1).